A 690-amino-acid chain; its full sequence is Eukaryotic translation initiation factor 3 subunit B (690 aa).

Residues 1 to 11 (MAKKKSEEHSG) show a composition bias toward basic and acidic residues. The disordered stretch occupies residues 1–36 (MAKKKSEEHSGADANDSDYTEEPNFDDPPNFVDNIS). Over residues 15–25 (NDSDYTEEPNF) the composition is skewed to acidic residues. Residues 57 to 141 (SVVVVDNMPK…YTFAVNLFTD (85 aa)) form the RRM domain. WD repeat units follow at residues 207 to 246 (TRER…KIQK), 292 to 331 (GDGM…LLDL), 334 to 369 (IKIP…TLME), 442 to 484 (EIRE…KPSL), and 530 to 575 (PDHF…IRRT). Residues 614-645 (QKDRLRLTRASKELLEKRSQLRETFMEYRNKR) are a coiled coil.

It belongs to the eIF-3 subunit B family. As to quaternary structure, component of the eukaryotic translation initiation factor 3 (eIF-3) complex. The eIF-3 complex interacts with pix. Interacts with mxt.

Its subcellular location is the cytoplasm. Functionally, RNA-binding component of the eukaryotic translation initiation factor 3 (eIF-3) complex, which is involved in protein synthesis of a specialized repertoire of mRNAs and, together with other initiation factors, stimulates binding of mRNA and methionyl-tRNAi to the 40S ribosome. The eIF-3 complex specifically targets and initiates translation of a subset of mRNAs involved in cell proliferation. This Drosophila virilis (Fruit fly) protein is Eukaryotic translation initiation factor 3 subunit B.